The chain runs to 238 residues: MALTTPLSITAIVPAAGVGSRMKADRPKQYLLLNGKTVLEHTIEQLLAFPLVNKVVVAITDGDPYFPELTLAQDNRVIRVSGGKERADSVLSGLSYVQEHQLSEWVMVHDAARPCVRHSDIDKLITEVIPEHIGGILASPVRDTMKQATQEQCIETTIDRSVLWHALTPQLFTTELLYSALQTGLDKNLSITDESSAIELMGYQPKLVQGRADNLKITQPEDLDLAEFYLQKMKKETK.

This sequence belongs to the IspD/TarI cytidylyltransferase family. IspD subfamily.

The catalysed reaction is 2-C-methyl-D-erythritol 4-phosphate + CTP + H(+) = 4-CDP-2-C-methyl-D-erythritol + diphosphate. The protein operates within isoprenoid biosynthesis; isopentenyl diphosphate biosynthesis via DXP pathway; isopentenyl diphosphate from 1-deoxy-D-xylulose 5-phosphate: step 2/6. In terms of biological role, catalyzes the formation of 4-diphosphocytidyl-2-C-methyl-D-erythritol from CTP and 2-C-methyl-D-erythritol 4-phosphate (MEP). This chain is 2-C-methyl-D-erythritol 4-phosphate cytidylyltransferase, found in Aliivibrio fischeri (strain MJ11) (Vibrio fischeri).